We begin with the raw amino-acid sequence, 806 residues long: Leucine--tRNA ligase (806 aa).

Residues 54-64 (SYPSGDLHMGH) carry the 'HIGH' region motif. Positions 571–575 (KMSKS) match the 'KMSKS' region motif. An ATP-binding site is contributed by K574.

This sequence belongs to the class-I aminoacyl-tRNA synthetase family.

It is found in the cytoplasm. The enzyme catalyses tRNA(Leu) + L-leucine + ATP = L-leucyl-tRNA(Leu) + AMP + diphosphate. The polypeptide is Leucine--tRNA ligase (Tropheryma whipplei (strain TW08/27) (Whipple's bacillus)).